A 497-amino-acid chain; its full sequence is Proline--tRNA ligase (497 aa).

This sequence belongs to the class-II aminoacyl-tRNA synthetase family. ProS type 3 subfamily. In terms of assembly, homodimer.

It localises to the cytoplasm. The catalysed reaction is tRNA(Pro) + L-proline + ATP = L-prolyl-tRNA(Pro) + AMP + diphosphate. In terms of biological role, catalyzes the attachment of proline to tRNA(Pro) in a two-step reaction: proline is first activated by ATP to form Pro-AMP and then transferred to the acceptor end of tRNA(Pro). In Bacteroides fragilis (strain ATCC 25285 / DSM 2151 / CCUG 4856 / JCM 11019 / LMG 10263 / NCTC 9343 / Onslow / VPI 2553 / EN-2), this protein is Proline--tRNA ligase.